The sequence spans 540 residues: CTP synthase (540 aa).

Residues 1 to 264 form an amidoligase domain region; the sequence is MQYIVVTGGV…ISYLSKLSGK (264 aa). Serine 12 lines the CTP pocket. Serine 12 is a UTP binding site. Residue 13–18 coordinates ATP; that stretch reads GLGKGT. L-glutamine is bound at residue tyrosine 53. Residue aspartate 70 coordinates ATP. Mg(2+) contacts are provided by aspartate 70 and glutamate 140. Residues 147–149, 185–190, and arginine 221 each bind CTP; these read DIE and KTKPTQ. Residues 185-190 and arginine 221 contribute to the UTP site; that span reads KTKPTQ. A Glutamine amidotransferase type-1 domain is found at 294–527; it reads YVDLHDAYIS…VQQALIYKKN (234 aa). Glycine 347 provides a ligand contact to L-glutamine. Catalysis depends on cysteine 374, which acts as the Nucleophile; for glutamine hydrolysis. L-glutamine-binding positions include 375 to 378, glutamate 398, and arginine 455; that span reads LGFQ. Catalysis depends on residues histidine 500 and glutamate 502.

Belongs to the CTP synthase family. As to quaternary structure, homotetramer.

It catalyses the reaction UTP + L-glutamine + ATP + H2O = CTP + L-glutamate + ADP + phosphate + 2 H(+). The catalysed reaction is L-glutamine + H2O = L-glutamate + NH4(+). The enzyme catalyses UTP + NH4(+) + ATP = CTP + ADP + phosphate + 2 H(+). The protein operates within pyrimidine metabolism; CTP biosynthesis via de novo pathway; CTP from UDP: step 2/2. Allosterically activated by GTP, when glutamine is the substrate; GTP has no effect on the reaction when ammonia is the substrate. The allosteric effector GTP functions by stabilizing the protein conformation that binds the tetrahedral intermediate(s) formed during glutamine hydrolysis. Inhibited by the product CTP, via allosteric rather than competitive inhibition. Its function is as follows. Catalyzes the ATP-dependent amination of UTP to CTP with either L-glutamine or ammonia as the source of nitrogen. Regulates intracellular CTP levels through interactions with the four ribonucleotide triphosphates. This is CTP synthase from Thermoplasma volcanium (strain ATCC 51530 / DSM 4299 / JCM 9571 / NBRC 15438 / GSS1).